The following is a 370-amino-acid chain: Capsular polysaccharide phosphotransferase (370 aa).

It belongs to the stealth family.

Part of a capsular polysaccharide synthesis locus. This chain is Capsular polysaccharide phosphotransferase, found in Actinobacillus suis.